The primary structure comprises 600 residues: Zinc metalloproteinase-disintegrin-like stejnihagin-A (600 aa).

Positions M1 to S20 are cleaved as a signal peptide. Residues I21–E191 constitute a propeptide that is removed on maturation. Position 192 is a pyrrolidone carboxylic acid (Q192). The 192-residue stretch at R198–P389 folds into the Peptidase M12B domain. Disulfide bonds link C306-C384, C346-C368, and C348-C351. A glycan (N-linked (GlcNAc...) asparagine) is linked at N317. H331 is a Zn(2+) binding site. The active site involves E332. H335 and H341 together coordinate Zn(2+). N-linked (GlcNAc...) asparagine glycosylation is present at N367. Residues P397–N483 enclose the Disintegrin domain. Ca(2+) contacts are provided by V399, N402, L404, E406, E409, and D412. Cystine bridges form between C400–C429, C411–C424, C413–C419, C423–C446, C437–C443, C442–C468, C455–C475, C462–C494, C487–C499, C506–C556, C521–C565, C534–C544, C551–C587, and C581–C593. Positions E461 to D463 match the D/ECD-tripeptide motif. N568 is a glycosylation site (N-linked (GlcNAc...) asparagine).

This sequence belongs to the venom metalloproteinase (M12B) family. P-III subfamily. P-IIIa sub-subfamily. In terms of assembly, monomer. Requires Zn(2+) as cofactor. In terms of tissue distribution, expressed by the venom gland.

The protein resides in the secreted. Functionally, this metalloproteinase-disintegrin-like impairs hemostasis in the envenomed animal. This is Zinc metalloproteinase-disintegrin-like stejnihagin-A from Trimeresurus stejnegeri (Chinese green tree viper).